A 240-amino-acid polypeptide reads, in one-letter code: Octanoyltransferase (240 aa).

Positions 1 to 22 (MGTTGTNDGATTPPANTSTPAV) are disordered. The span at 10 to 21 (ATTPPANTSTPA) shows a compositional bias: low complexity. One can recognise a BPL/LPL catalytic domain in the interval 51–236 (EKIPDTILLL…NLVDALNGDL (186 aa)). Substrate contacts are provided by residues 89–96 (RGGRITWH), 166–168 (AIG), and 179–181 (GVA). Cysteine 197 functions as the Acyl-thioester intermediate in the catalytic mechanism.

The protein belongs to the LipB family.

It is found in the cytoplasm. The catalysed reaction is octanoyl-[ACP] + L-lysyl-[protein] = N(6)-octanoyl-L-lysyl-[protein] + holo-[ACP] + H(+). The protein operates within protein modification; protein lipoylation via endogenous pathway; protein N(6)-(lipoyl)lysine from octanoyl-[acyl-carrier-protein]: step 1/2. Catalyzes the transfer of endogenously produced octanoic acid from octanoyl-acyl-carrier-protein onto the lipoyl domains of lipoate-dependent enzymes. Lipoyl-ACP can also act as a substrate although octanoyl-ACP is likely to be the physiological substrate. This is Octanoyltransferase from Corynebacterium jeikeium (strain K411).